Consider the following 253-residue polypeptide: tRNA pseudouridine synthase A (253 aa).

The Nucleophile role is filled by D53. Y111 serves as a coordination point for substrate.

This sequence belongs to the tRNA pseudouridine synthase TruA family. In terms of assembly, homodimer.

The catalysed reaction is uridine(38/39/40) in tRNA = pseudouridine(38/39/40) in tRNA. Formation of pseudouridine at positions 38, 39 and 40 in the anticodon stem and loop of transfer RNAs. In Oceanobacillus iheyensis (strain DSM 14371 / CIP 107618 / JCM 11309 / KCTC 3954 / HTE831), this protein is tRNA pseudouridine synthase A.